The sequence spans 120 residues: Chaperonin GroEL (120 aa).

Position 23–27 (23–27 (DGTTT)) interacts with ATP.

Belongs to the chaperonin (HSP60) family. Forms a cylinder of 14 subunits composed of two heptameric rings stacked back-to-back. Interacts with the co-chaperonin GroES.

The protein localises to the cytoplasm. The catalysed reaction is ATP + H2O + a folded polypeptide = ADP + phosphate + an unfolded polypeptide.. Together with its co-chaperonin GroES, plays an essential role in assisting protein folding. The GroEL-GroES system forms a nano-cage that allows encapsulation of the non-native substrate proteins and provides a physical environment optimized to promote and accelerate protein folding. The protein is Chaperonin GroEL of Mycolicibacterium vaccae (Mycobacterium vaccae).